We begin with the raw amino-acid sequence, 500 residues long: Carnosic acid synthase (500 aa).

The helical transmembrane segment at 4–24 threads the bilayer; the sequence is LILLSLAFLASCVVAYSRRRP. C443 lines the heme pocket.

The protein belongs to the cytochrome P450 family. The cofactor is heme. As to expression, mostly expressed in young leaves, particularly in glandular trichomes.

It localises to the membrane. It catalyses the reaction 11-hydroxyferruginol + 3 reduced [NADPH--hemoprotein reductase] + 3 O2 = carnosate + 3 oxidized [NADPH--hemoprotein reductase] + 4 H2O + 4 H(+). The catalysed reaction is miltiradiene + 2 reduced [NADPH--hemoprotein reductase] + 2 O2 = miltiradien-20-al + 2 oxidized [NADPH--hemoprotein reductase] + 3 H2O + 2 H(+). It carries out the reaction ferruginol + 3 reduced [NADPH--hemoprotein reductase] + 3 O2 = pisiferate + 3 oxidized [NADPH--hemoprotein reductase] + 4 H2O + 4 H(+). It participates in secondary metabolite biosynthesis; terpenoid biosynthesis. Monooxygenase involved in the biosynthesis of carnosate, a potent antioxidant labdane-related diterpene natural product. Catalyzes the oxidation of 11-hydroxyferruginol to produce carnosate. Mediates the conversion of miltiradien into miltiradien-20-al. Also involved in the production of pisiferic acid and derivative products from ferruginol. This is Carnosic acid synthase from Salvia fruticosa (Greek sage).